Here is a 580-residue protein sequence, read N- to C-terminus: High affinity choline transporter 1 (580 aa).

The Extracellular segment spans residues 1–6 (MSFHVE). Residues 7 to 27 (GLVAIILFYLLIFLVGIWAAW) traverse the membrane as a helical segment. At 28 to 48 (KTKNSGNPEERSEAIIVGGRD) the chain is on the cytoplasmic side. A helical membrane pass occupies residues 49-69 (IGLLVGGFTMTATWVGGGYIN). At 70 to 81 (GTAEAVYGPGCG) the chain is on the extracellular side. A helical membrane pass occupies residues 82-102 (LAWAQAPIGYSLSLILGGLFF). Over 103-125 (AKPMRSKGYVTMLDPFQQIYGKR) the chain is Cytoplasmic. The helical transmembrane segment at 126–146 (MGGLLFIPALMGEMFWAAAIF) threads the bilayer. Residues 147 to 164 (SALGATISVIIDVDVNIS) lie on the Extracellular side of the membrane. A helical transmembrane segment spans residues 165-185 (VIVSALIAILYTLVGGLYSVA). The Cytoplasmic segment spans residues 186 to 191 (YTDVVQ). A helical membrane pass occupies residues 192 to 212 (LFCIFIGLWISVPFALSHPAV). Residues 213-237 (TDIGFTAVHAKYQSPWLGTIESVEV) are Extracellular-facing. Residues 238-258 (YTWLDNFLLLMLGGIPWQAYF) traverse the membrane as a helical segment. Residues 259–274 (QRVLSSSSATYAQVLS) lie on the Cytoplasmic side of the membrane. A helical transmembrane segment spans residues 275–295 (FLAAFGCLVMALPAICIGAIG). Over 296–317 (ASTDWNQTAYGYPDPKTKEEAD) the chain is Extracellular. Asparagine 301 is a glycosylation site (N-linked (GlcNAc...) asparagine). A helical transmembrane segment spans residues 318-338 (MILPIVLQYLCPVYISFFGLG). The Cytoplasmic segment spans residues 339–376 (AVSAAVMSSADSSILSASSMFARNIYQLSFRQNASDKE). The chain crosses the membrane as a helical span at residues 377 to 397 (IVWVMRITVLVFGASATAMAL). Residues 398 to 406 (LTKTVYGLW) lie on the Extracellular side of the membrane. A helical membrane pass occupies residues 407–427 (YLSSDLVYIIIFPQLLCVLFI). Residues 428-435 (KGTNTYGA) lie on the Cytoplasmic side of the membrane. A helical transmembrane segment spans residues 436–456 (VAGYIFGLFLRITGGEPYLYL). At 457–481 (QPLIFYPGYYSDKNGIYNQRFPFKT) the chain is on the extracellular side. A helical membrane pass occupies residues 482-502 (LSMVTSFFTNICVSYLAKYLF). Residues 502–580 (FESGTLPPKL…EGSGTEDNLQ (79 aa)) form a mediates interaction with SEC14L1 region. Residues 503 to 580 (ESGTLPPKLD…EGSGTEDNLQ (78 aa)) lie on the Cytoplasmic side of the membrane. The short motif at 527–532 (DKTILV) is the Dileucine-like motif element.

The protein belongs to the sodium:solute symporter (SSF) (TC 2.A.21) family. In terms of assembly, homooligomerizes at cell surface. Interacts with SEC14L1; may regulate SLC5A7. Post-translationally, phosphorylated by PKC and dephosphorylated by PP1/PP2A. In terms of tissue distribution, found in spinal cord, brain-stem, mid-brain and striatum. Specific for cholinergic neurons.

The protein localises to the presynaptic cell membrane. It is found in the cell projection. It localises to the axon. The protein resides in the early endosome membrane. Its subcellular location is the cytoplasmic vesicle. The protein localises to the secretory vesicle. It is found in the synaptic vesicle membrane. It carries out the reaction choline(out) + n Na(+)(out) = choline(in) + n Na(+)(in). Its activity is regulated as follows. Choline uptake activity is regulated by SLC5A7/CHT1 internalization (inactive form) from the cell surface and recycling of internalized SLC5A7/CHT1 into the cell surface (active form). Activated by extracellular chloride ion. Specifically inhibited by nanomolar concentrations of hemicholinium 3. Functionally, high-affinity Na(+)-coupled choline transmembrane symporter. Functions as an electrogenic, voltage-dependent transporter with variable charge/choline stoichiometry. Choline uptake and choline-induced current is also Cl(-)-dependent where Cl(-) is likely a regulatory ion rather than cotransported ion. Plays a critical role in acetylcholine (ACh) synthesis by taking up the substrate choline from the synaptic cleft into the presynaptic nerve terminals after neurotransmitter release. SLC5A7/CHT1-mediated choline high-affinity transport in cholinergic neurons is the rate-limiting step for production of ACh, thereby facilitating communication by subsequent action potentials. Localized predominantly in presynaptic terminal intracellular organelles, and translocated to the plasma membrane in active form in response to neuronal activity. The sequence is that of High affinity choline transporter 1 from Mus musculus (Mouse).